A 449-amino-acid chain; its full sequence is Malonyl-CoA:anthocyanidin 5-O-glucoside-6''-O-malonyltransferase (449 aa).

An N-acetylmethionine modification is found at methionine 1. Active-site proton acceptor residues include histidine 162 and aspartate 394.

This sequence belongs to the plant acyltransferase family. As to expression, expressed in flowers. Detected in leaves, stems, roots and siliques.

The catalysed reaction is anthocyanin A3 + malonyl-CoA = anthocyanin A5 + CoA. It catalyses the reaction anthocyanin A7 + malonyl-CoA = anthocyanin A9 + CoA. The enzyme catalyses anthocyanin A6 + malonyl-CoA = anthocyanin A8 + CoA. It carries out the reaction anthocyanin A10 + malonyl-CoA = anthocyanin A11 + CoA. Its function is as follows. Catalyzes the malonylation of the 5-O-glucose residue of anthocyanins, using malonyl-CoA as the malonyl donor. Acts only on anthocyanin substrates containing a 5-O-glucosyl moiety. Acts on the four native A.thaliana anthocyanins, A3, A7, and to a lesser extent, A6 and A10. Can also use the non-native anthocyanin compounds cyanin (cyanidin 3,5-diglucoside), malvin, pelargonidin 3,5-diglucoside, peonidin 3,5-diglucoside, cyanidin 3-coumaroylglucoside 5-glucoside, delphinidin 3-coumaroylrutinoside 5-glucoside and petunidin 3-coumaroylrutinoside 5-glucoside as substrates. Is the sole enzyme responsible for producing malonylated anthocyanin 5-O-glucosides in A.thaliana. Is not able to catalyze acyl transfer using acetyl-CoA, butyryl-CoA, hexanoyl-CoA, benzoyl-CoA, cinnamoyl-CoA, methylmalonyl-CoA, succinyl-CoA, p-coumaroyl-CoA or caffeoyl-CoA. The chain is Malonyl-CoA:anthocyanidin 5-O-glucoside-6''-O-malonyltransferase (5MAT) from Arabidopsis thaliana (Mouse-ear cress).